Here is a 217-residue protein sequence, read N- to C-terminus: Ribonuclease HII (217 aa).

An RNase H type-2 domain is found at 27–216 (SRIAGVDEAG…VKESIREGIC (190 aa)). Asp33, Glu34, and Asp126 together coordinate a divalent metal cation.

It belongs to the RNase HII family. Requires Mn(2+) as cofactor. Mg(2+) is required as a cofactor.

The protein localises to the cytoplasm. It catalyses the reaction Endonucleolytic cleavage to 5'-phosphomonoester.. In terms of biological role, endonuclease that specifically degrades the RNA of RNA-DNA hybrids. The polypeptide is Ribonuclease HII (rnhB) (Chlamydia muridarum (strain MoPn / Nigg)).